The following is a 237-amino-acid chain: Listeriolysin regulatory protein (237 aa).

The HTH crp-type domain maps to asparagine 137 to aspartate 212.

Functionally, positively regulates expression of listeriolysin, of 1-phosphadidylinositol phosphodiesterase (PI-PLC) and other virulence factors. The chain is Listeriolysin regulatory protein (prfA) from Listeria monocytogenes serovar 1/2a (strain ATCC BAA-679 / EGD-e).